A 399-amino-acid polypeptide reads, in one-letter code: Glucose-1-phosphate adenylyltransferase (399 aa).

Alpha-D-glucose 1-phosphate contacts are provided by residues Gly-158, 174-175, and Ser-192; that span reads EK.

Belongs to the bacterial/plant glucose-1-phosphate adenylyltransferase family. As to quaternary structure, homotetramer.

It carries out the reaction alpha-D-glucose 1-phosphate + ATP + H(+) = ADP-alpha-D-glucose + diphosphate. It participates in glycan biosynthesis; glycogen biosynthesis. In terms of biological role, involved in the biosynthesis of ADP-glucose, a building block required for the elongation reactions to produce glycogen. Catalyzes the reaction between ATP and alpha-D-glucose 1-phosphate (G1P) to produce pyrophosphate and ADP-Glc. This chain is Glucose-1-phosphate adenylyltransferase, found in Streptomyces coelicolor (strain ATCC BAA-471 / A3(2) / M145).